The primary structure comprises 212 residues: Large ribosomal subunit protein uL3 (212 aa).

The disordered stretch occupies residues 119–146 (YQGNIKRWGQSRGPETHGSRYHRIPGSM).

This sequence belongs to the universal ribosomal protein uL3 family. Part of the 50S ribosomal subunit. Forms a cluster with proteins L14 and L19.

In terms of biological role, one of the primary rRNA binding proteins, it binds directly near the 3'-end of the 23S rRNA, where it nucleates assembly of the 50S subunit. The chain is Large ribosomal subunit protein uL3 from Lactobacillus helveticus (strain DPC 4571).